A 130-amino-acid polypeptide reads, in one-letter code: Large ribosomal subunit protein bL12 (130 aa).

It belongs to the bacterial ribosomal protein bL12 family. As to quaternary structure, homodimer. Part of the ribosomal stalk of the 50S ribosomal subunit. Forms a multimeric L10(L12)X complex, where L10 forms an elongated spine to which 2 to 4 L12 dimers bind in a sequential fashion. Binds GTP-bound translation factors.

Forms part of the ribosomal stalk which helps the ribosome interact with GTP-bound translation factors. Is thus essential for accurate translation. This is Large ribosomal subunit protein bL12 from Chlamydia muridarum (strain MoPn / Nigg).